Consider the following 184-residue polypeptide: ATP synthase subunit b (184 aa).

A helical membrane pass occupies residues 15–34 (VQPGLIFWTLVTFVIAAVVL).

The protein belongs to the ATPase B chain family. F-type ATPases have 2 components, F(1) - the catalytic core - and F(0) - the membrane proton channel. F(1) has five subunits: alpha(3), beta(3), gamma(1), delta(1), epsilon(1). F(0) has three main subunits: a(1), b(2) and c(10-14). The alpha and beta chains form an alternating ring which encloses part of the gamma chain. F(1) is attached to F(0) by a central stalk formed by the gamma and epsilon chains, while a peripheral stalk is formed by the delta and b chains.

Its subcellular location is the cell inner membrane. Its function is as follows. F(1)F(0) ATP synthase produces ATP from ADP in the presence of a proton or sodium gradient. F-type ATPases consist of two structural domains, F(1) containing the extramembraneous catalytic core and F(0) containing the membrane proton channel, linked together by a central stalk and a peripheral stalk. During catalysis, ATP synthesis in the catalytic domain of F(1) is coupled via a rotary mechanism of the central stalk subunits to proton translocation. Functionally, component of the F(0) channel, it forms part of the peripheral stalk, linking F(1) to F(0). This is ATP synthase subunit b from Myxococcus xanthus (strain DK1622).